Consider the following 320-residue polypeptide: 4-diphosphocytidyl-2-C-methyl-D-erythritol kinase (320 aa).

Residue Lys-20 is part of the active site. Position 112–122 (112–122 (PVAGGMGGGSA)) interacts with ATP. Asp-154 is a catalytic residue.

This sequence belongs to the GHMP kinase family. IspE subfamily.

It carries out the reaction 4-CDP-2-C-methyl-D-erythritol + ATP = 4-CDP-2-C-methyl-D-erythritol 2-phosphate + ADP + H(+). The protein operates within isoprenoid biosynthesis; isopentenyl diphosphate biosynthesis via DXP pathway; isopentenyl diphosphate from 1-deoxy-D-xylulose 5-phosphate: step 3/6. Functionally, catalyzes the phosphorylation of the position 2 hydroxy group of 4-diphosphocytidyl-2C-methyl-D-erythritol. The protein is 4-diphosphocytidyl-2-C-methyl-D-erythritol kinase of Pseudarthrobacter chlorophenolicus (strain ATCC 700700 / DSM 12829 / CIP 107037 / JCM 12360 / KCTC 9906 / NCIMB 13794 / A6) (Arthrobacter chlorophenolicus).